Consider the following 563-residue polypeptide: Merozoite receptor PK66 (563 aa).

Positions Met-1 to Gln-13 are cleaved as a signal peptide. Topologically, residues Cys-14–Leu-487 are extracellular. N-linked (GlcNAc...) asparagine glycans are attached at residues Asn-36, Asn-107, Asn-176, Asn-189, Asn-238, and Asn-441. A helical membrane pass occupies residues Ile-488–Arg-508. Over Lys-509–Tyr-563 the chain is Cytoplasmic.

It belongs to the apicomplexan parasites AMA1 family.

The protein localises to the membrane. In terms of biological role, merozoite receptor PK66 is a surface antigen involved in parasite invasion of erythrocytes. This Plasmodium knowlesi (strain nuri) protein is Merozoite receptor PK66 (PK66).